A 614-amino-acid chain; its full sequence is Chaperone protein DnaK (614 aa).

Thr-175 carries the post-translational modification Phosphothreonine; by autocatalysis. The disordered stretch occupies residues 577–614 (QAGGAEGAADPNAAAGGAQSAPHDDNVVDADFKVDEDK). Low complexity predominate over residues 583-597 (GAADPNAAAGGAQSA). The segment covering 598–614 (PHDDNVVDADFKVDEDK) has biased composition (basic and acidic residues).

This sequence belongs to the heat shock protein 70 family.

Its function is as follows. Acts as a chaperone. The polypeptide is Chaperone protein DnaK (Clostridium beijerinckii (strain ATCC 51743 / NCIMB 8052) (Clostridium acetobutylicum)).